The chain runs to 385 residues: Hsp70/Hsp90 co-chaperone CNS1 (385 aa).

The interval 1–37 (MSSVNANGGYTKPQKYVPGPGDPELPPQLSEFKDKTS) is disordered. TPR repeat units follow at residues 83–116 (AENF…ECED), 121–154 (ESLY…NPKN), and 155–189 (VKCY…DPEN).

The protein belongs to the TTC4 family. As to quaternary structure, monomer. Component of Hsp70 and Hsp90 chaperone complexes. Interacts (via TPR repeats) with HSC82 and HSP82 (via C-terminal MEEVD pentapeptide). Interacts with CPR7, SSA1 and SPI1.

The protein localises to the cytoplasm. In terms of biological role, co-chaperone that binds to the molecular chaperones Hsp90 (HSC82 and HSP82) and Hsp70 (SSA1). Stimulates SSA1 ATPase activity, but not Hsp90 ATPase activity. Involved in only a subset of Hsp90 functions. The chain is Hsp70/Hsp90 co-chaperone CNS1 (CNS1) from Saccharomyces cerevisiae (strain ATCC 204508 / S288c) (Baker's yeast).